Here is a 246-residue protein sequence, read N- to C-terminus: Aquaporin AqpM (246 aa).

The Cytoplasmic segment spans residues 1-11 (MVSLTKRCIAE). The helical transmembrane segment at 12 to 32 (FIGTFILVFFGAGSAAVTLMI) threads the bilayer. Over 33 to 55 (ASGGTSPNPFNIGIGLLGGLGDW) the chain is Extracellular. Residues 56 to 76 (VAIGLAFGFAIAASIYALGNI) traverse the membrane as a helical segment. The Cytoplasmic segment spans residues 77-103 (SGCHINPAVTIGLWSVKKFPGREVVPY). The NPA 1 motif lies at 82-84 (NPA). Residues 104-124 (IIAQLLGAAFGSFIFLQCAGI) form a helical membrane-spanning segment. Topologically, residues 125-145 (GAATVGGLGATAPFPGISYWQ) are extracellular. The chain crosses the membrane as a helical span at residues 146–166 (AMLAEVVGTFLLMITIMGIAV). Topologically, residues 167 to 172 (DERAPK) are cytoplasmic. The chain crosses the membrane as a helical span at residues 173–193 (GFAGIIIGLTVAGIITTLGNI). At 194–217 (SGSSLNPARTFGPYLNDMIFAGTN) the chain is on the extracellular side. The NPA 2 motif lies at 199 to 201 (NPA). The chain crosses the membrane as a helical span at residues 218–238 (LWNYYPIYVIGPIVGAVLAAL). Over 239–246 (TYQYLTSE) the chain is Cytoplasmic.

It belongs to the MIP/aquaporin (TC 1.A.8) family. In terms of assembly, homotetramer.

It localises to the cell membrane. Channel that permits osmotically driven movement of water in both directions. It mediates rapid entry or exit of water in response to abrupt changes in osmolarity. Also exhibits a transient but reproducible increase in the initial glycerol flux. The chain is Aquaporin AqpM (aqpM) from Methanothermobacter marburgensis (strain ATCC BAA-927 / DSM 2133 / JCM 14651 / NBRC 100331 / OCM 82 / Marburg) (Methanobacterium thermoautotrophicum).